Consider the following 223-residue polypeptide: MGQKGCPIGFRTGVTKKWRSLWYGNKQEFGKFLIEDVKIREFLRKKPSCQGAAGFVVRRMSGKIEVTIQTARPGLVIGKKGAEVDLLKEELRKLTGKEVWVEIAEIKRPELNAKLVADNIARQIERRVSFRRAMKKAMQSVMDAGAVGVKIQVSGRLAGAEIARSEWYKNGRVPLHTLRADIDYAAASAATTYGIIGVKVWINLGEKASTASSNVGTAAPVVQ.

In terms of domain architecture, KH type-2 spans 39–117 (IREFLRKKPS…RPELNAKLVA (79 aa)).

The protein belongs to the universal ribosomal protein uS3 family. As to quaternary structure, part of the 30S ribosomal subunit. Forms a tight complex with proteins S10 and S14.

Functionally, binds the lower part of the 30S subunit head. Binds mRNA in the 70S ribosome, positioning it for translation. The sequence is that of Small ribosomal subunit protein uS3 from Chlamydia abortus (strain DSM 27085 / S26/3) (Chlamydophila abortus).